The chain runs to 283 residues: Tetraspanin-33 (283 aa).

At 1–24 the chain is on the cytoplasmic side; that stretch reads MARRPGAPAAYGEDFSFVSPLVKY. A helical transmembrane segment spans residues 25 to 45; it reads LLFFFNMLFWVISMVMVAVGV. At 46–64 the chain is on the extracellular side; it reads YARLMKHEEAALACLAVDP. A helical membrane pass occupies residues 65–85; that stretch reads AILLIVVGILMFLLTFCGCIG. At 86–96 the chain is on the cytoplasmic side; it reads SLRENICLLQT. A helical transmembrane segment spans residues 97–117; the sequence is FSLCLTVVFLLQLAAGVLGFV. Topologically, residues 118–235 are extracellular; the sequence is FSDKVRGKVS…DRLVNWIHSN (118 aa). 4 cysteine pairs are disulfide-bonded: C156–C224, C157–C189, C173–C183, and C190–C203. An N-linked (GlcNAc...) asparagine glycan is attached at N172. The helical transmembrane segment at 236–256 threads the bilayer; the sequence is LFVLGGVALGLAIPQLVGIML. At 257 to 283 the chain is on the cytoplasmic side; that stretch reads SMILVSQIKDQIKLQLYNQQHRADPWY.

The protein belongs to the tetraspanin (TM4SF) family. As to quaternary structure, homodimer; disulfide-linked. Interacts (via extracellular domain) with ADAM10 (via extracellular domain). Interacts (via cytoplasmic domain) with PLEKHA7 (via WW domains); the interaction is dependent on PDZD11 being bound to PLEKHA7 and facilitates the docking of ADAM10 to zonula adherens.

The protein resides in the cell membrane. It is found in the cell junction. Its subcellular location is the adherens junction. The protein localises to the cytoplasm. Part of TspanC8 subgroup, composed of 6 members that interact with the transmembrane metalloprotease ADAM10. This interaction is required for ADAM10 exit from the endoplasmic reticulum and for enzymatic maturation and trafficking to the cell surface as well as substrate specificity. Different TspanC8/ADAM10 complexes have distinct substrates. Plays an important role in normal erythropoiesis. It has a role in the differentiation of erythroid progenitors. Negatively regulates ligand-induced Notch activity probably by regulating ADAM10 activity. Mediates docking of ADAM10 to zonula adherens by interacting with ADAM10 and, in a PDZD11-dependent manner, with the zonula adherens protein PLEKHA7. The chain is Tetraspanin-33 (TSPAN33) from Bos taurus (Bovine).